An 81-amino-acid chain; its full sequence is Small cysteine-rich protein 1 1 (81 aa).

The N-terminal stretch at 1–19 is a signal peptide; it reads MGVHFNICLLLLLVATISS. The propeptide occupies 20–39; it reads QTLKATEKDDSTDENPFGIY.

This sequence belongs to the Cnidaria small cysteine-rich protein (SCRiP) family. alpha subfamily. The basic myotoxic domain of rattlesnake crotamine toxins (with 6 Cys residues) has been detected in this protein. However, this protein contains 2 additional Cys at the C-terminal region. Hence, this protein may contain 4 disulfide bonds instead of the 3 suggested by the myotoxin domain.

Its subcellular location is the secreted. The protein resides in the nematocyst. Induces neurotoxic symptoms on zebrafish. Has also been claimed to be implied in calcification, but tests on homolog proteins suggest that proteins of this family have a neurotoxic function and not a calcification function. The polypeptide is Small cysteine-rich protein 1 1 (Montipora capitata (Rice coral)).